Consider the following 88-residue polypeptide: Small ribosomal subunit protein bS18 (88 aa).

Positions 1–26 are disordered; that stretch reads MAFAQSGGAGGGGGQRRPFFRRRKTC.

It belongs to the bacterial ribosomal protein bS18 family. Part of the 30S ribosomal subunit. Forms a tight heterodimer with protein bS6.

Functionally, binds as a heterodimer with protein bS6 to the central domain of the 16S rRNA, where it helps stabilize the platform of the 30S subunit. The chain is Small ribosomal subunit protein bS18 from Xanthobacter autotrophicus (strain ATCC BAA-1158 / Py2).